The primary structure comprises 115 residues: Transmembrane protein 14C (115 aa).

4 helical membrane passes run 8–28 (LVPL…GGII), 33–53 (AGSV…GLGA), 63–83 (VWVF…RFYN), and 88–108 (MPAG…VAKI).

This sequence belongs to the TMEM14 family.

It is found in the mitochondrion membrane. In terms of biological role, required for normal heme biosynthesis. The sequence is that of Transmembrane protein 14C (Tmem14c) from Rattus norvegicus (Rat).